The sequence spans 449 residues: RNA binding protein fox-1 homolog 2 (449 aa).

A compositionally biased stretch (low complexity) spans 1–21 (MAEGGQAQQQPPQLGPGAAAR). The interval 1-186 (MAEGGQAQQQ…STPKRLHVSN (186 aa)) is disordered. 2 stretches are compositionally biased toward polar residues: residues 77-86 (QGNQEPTTTP) and 118-138 (YAGQTSEHNLTLYGSTQPHGE). The span at 139-176 (QSSNSPSNQNGSLTQTEGGAQTDGQQSQTQSSENSESK) shows a compositional bias: low complexity. One can recognise an RRM domain in the interval 180-256 (KRLHVSNIPF…RKIEVNNATA (77 aa)). Arg236, Gly241, Tyr268, and Lys273 each carry omega-N-methylarginine. 2 positions are modified to asymmetric dimethylarginine: Glu285 and Pro317. 5 positions are modified to omega-N-methylarginine: Leu318, Leu323, Ala336, Arg340, and Gly341. Residues Arg356 and Arg388 each carry the asymmetric dimethylarginine modification. Asymmetric dimethylarginine; alternate is present on residues Arg440 and Arg445. Omega-N-methylarginine; alternate occurs at positions 440 and 445.

As to quaternary structure, interacts with ER-alpha N-terminal activation domain. Interacts with RBPMS; the interaction allows cooperative assembly of stable cell-specific alternative splicing regulatory complexes. As to expression, detected in brain neurons (at protein level). Detected in heart, brain, embryo, lung, liver, kidney and ovary.

It localises to the nucleus. The protein resides in the cytoplasm. Its function is as follows. RNA-binding protein that regulates alternative splicing events by binding to 5'-UGCAUGU-3' elements. Prevents binding of U2AF2 to the 3'-splice site. Regulates alternative splicing of tissue-specific exons and of differentially spliced exons during erythropoiesis. Seems to act as a coregulatory factor of ER-alpha. Together with RNA binding proteins RBPMS and MBNL1/2, activates vascular smooth muscle cells alternative splicing events. The polypeptide is RNA binding protein fox-1 homolog 2 (Rbfox2) (Mus musculus (Mouse)).